Reading from the N-terminus, the 609-residue chain is Mitochondrial nucleoid-associated protein 1 (609 aa).

The Mitochondrial matrix portion of the chain corresponds to 1–552 (MSDNPPRMEV…IRCNTTIRKS (552 aa)). 3 disordered regions span residues 142–168 (ASEK…NPSE), 183–202 (SNQD…TTSG), and 410–441 (QLSL…HTPQ). The segment covering 146 to 161 (TSPKRELAKDLPKSGE) has biased composition (basic and acidic residues). The segment covering 418–441 (DSQFQASHTGCQSPLCSAQRHTPQ) has biased composition (polar residues). A helical transmembrane segment spans residues 553–573 (GFGGITMLFTGYFVLCCSWSF). Residues 574–609 (RRLKKLCRPLPWKSTVPPCIGVAKTTGDCRSKTCLD) are Mitochondrial intermembrane-facing.

The protein resides in the mitochondrion inner membrane. Its subcellular location is the mitochondrion matrix. The protein localises to the mitochondrion nucleoid. Critical regulator of mitochondrial DNA (mtDNA) abundance. Binds dsDNA throughout the mitochondrial genome without sequence specificity and controls mtDNA copy number by promoting its replication. Also plays important roles in mitochondrial metabolism and cell proliferation. The protein is Mitochondrial nucleoid-associated protein 1 of Homo sapiens (Human).